Reading from the N-terminus, the 80-residue chain is Exodeoxyribonuclease 7 small subunit (80 aa).

Belongs to the XseB family. Heterooligomer composed of large and small subunits.

The protein resides in the cytoplasm. The catalysed reaction is Exonucleolytic cleavage in either 5'- to 3'- or 3'- to 5'-direction to yield nucleoside 5'-phosphates.. In terms of biological role, bidirectionally degrades single-stranded DNA into large acid-insoluble oligonucleotides, which are then degraded further into small acid-soluble oligonucleotides. The polypeptide is Exodeoxyribonuclease 7 small subunit (Salmonella paratyphi B (strain ATCC BAA-1250 / SPB7)).